The sequence spans 79 residues: D-alanyl carrier protein (79 aa).

The Carrier domain maps to 1–76 (MKEQIFDIIE…KIAARVQEKT (76 aa)). S34 is subject to O-(pantetheine 4'-phosphoryl)serine.

The protein belongs to the DltC family. In terms of processing, 4'-phosphopantetheine is transferred from CoA to a specific serine of apo-DCP.

It is found in the cytoplasm. It participates in cell wall biogenesis; lipoteichoic acid biosynthesis. Carrier protein involved in the D-alanylation of lipoteichoic acid (LTA). The loading of thioester-linked D-alanine onto DltC is catalyzed by D-alanine--D-alanyl carrier protein ligase DltA. The DltC-carried D-alanyl group is further transferred to cell membrane phosphatidylglycerol (PG) by forming an ester bond, probably catalyzed by DltD. D-alanylation of LTA plays an important role in modulating the properties of the cell wall in Gram-positive bacteria, influencing the net charge of the cell wall. The chain is D-alanyl carrier protein from Lactococcus lactis subsp. cremoris (strain SK11).